A 117-amino-acid polypeptide reads, in one-letter code: Cysteine rich necrotrophic effector Tox1 (117 aa).

Residues 1–17 form the signal peptide; sequence MKLTMVLSVAFATLTFA. Intrachain disulfides connect Cys-36–Cys-87, Cys-44–Cys-55, Cys-53–Cys-58, Cys-54–Cys-98, Cys-63–Cys-83, Cys-67–Cys-117, Cys-86–Cys-97, and Cys-107–Cys-110. The segment at 87–117 is chitin-binding domain; that stretch reads CNAGGESHELCCSIASAGIDCNPCTAGLRMC.

In terms of assembly, interacts with host cell wall-associated kinase receptor Snn1.

The protein resides in the secreted. In terms of biological role, necrotrophic effector that plays a critical role during fungal penetration, via its interaction with the host Snn1 protein. Snn1 is a member of the wall-associated kinase class of receptors, which are known to drive pathways for biotrophic pathogen resistance. Recognition of Tox1 by Snn1 induces mitogen-activated protein kinase genes such as MAPK3 and activates programmed cell death, which allows this necrotroph to gain nutrients and sporulate. Recognition of Tox1 by Snn1 also induces other plant defense responses, including oxidative burst and pathogenesis related (PR) gene expression. The development of necrosis and disease induced by Tox1, and particularly penetration during infection, requires light, which is probably related to the light-dependent expression of host Snn1. Tox1 plays an additional role in providing significant protection from wheat chitinases by binding chitin in the fungal cell wall. This Phaeosphaeria nodorum (strain SN15 / ATCC MYA-4574 / FGSC 10173) (Glume blotch fungus) protein is Cysteine rich necrotrophic effector Tox1.